We begin with the raw amino-acid sequence, 563 residues long: 2-isopropylmalate synthase (563 aa).

Positions 31 to 305 constitute a Pyruvate carboxyltransferase domain; that stretch reads PIWMSTDLRD…DPGLDFAQIN (275 aa). Mg(2+) contacts are provided by Asp-40, His-244, His-246, and Asn-280. Residues 437-563 form a regulatory domain region; the sequence is RAEPIEYLSH…EWARLCGGAE (127 aa).

Belongs to the alpha-IPM synthase/homocitrate synthase family. LeuA type 2 subfamily. In terms of assembly, homodimer. Requires Mg(2+) as cofactor.

It localises to the cytoplasm. It carries out the reaction 3-methyl-2-oxobutanoate + acetyl-CoA + H2O = (2S)-2-isopropylmalate + CoA + H(+). It functions in the pathway amino-acid biosynthesis; L-leucine biosynthesis; L-leucine from 3-methyl-2-oxobutanoate: step 1/4. Catalyzes the condensation of the acetyl group of acetyl-CoA with 3-methyl-2-oxobutanoate (2-ketoisovalerate) to form 3-carboxy-3-hydroxy-4-methylpentanoate (2-isopropylmalate). This Parvibaculum lavamentivorans (strain DS-1 / DSM 13023 / NCIMB 13966) protein is 2-isopropylmalate synthase.